The chain runs to 305 residues: Probable 5-dehydro-4-deoxyglucarate dehydratase (305 aa).

This sequence belongs to the DapA family.

The enzyme catalyses 5-dehydro-4-deoxy-D-glucarate + H(+) = 2,5-dioxopentanoate + CO2 + H2O. The protein operates within carbohydrate acid metabolism; D-glucarate degradation; 2,5-dioxopentanoate from D-glucarate: step 2/2. The polypeptide is Probable 5-dehydro-4-deoxyglucarate dehydratase (Xanthomonas campestris pv. campestris (strain 8004)).